Reading from the N-terminus, the 541-residue chain is Glucose-6-phosphate isomerase (541 aa).

Glutamate 347 serves as the catalytic Proton donor. Residues histidine 378 and lysine 506 contribute to the active site.

Belongs to the GPI family.

It is found in the cytoplasm. The enzyme catalyses alpha-D-glucose 6-phosphate = beta-D-fructose 6-phosphate. It functions in the pathway carbohydrate biosynthesis; gluconeogenesis. Its pathway is carbohydrate degradation; glycolysis; D-glyceraldehyde 3-phosphate and glycerone phosphate from D-glucose: step 2/4. Its function is as follows. Catalyzes the reversible isomerization of glucose-6-phosphate to fructose-6-phosphate. This Francisella tularensis subsp. holarctica (strain OSU18) protein is Glucose-6-phosphate isomerase.